Here is a 35-residue protein sequence, read N- to C-terminus: MSDIN-like toxin proprotein 6 (35 aa).

The propeptide occupies 1–10 (MSDINGTRLP). The segment at residues 11–20 (IPGLIPLGIP) is a cross-link (cyclopeptide (Ile-Pro)). Residues 21 to 35 (CVSDDVNPTLTRGER) constitute a propeptide that is removed on maturation.

This sequence belongs to the MSDIN fungal toxin family. Post-translationally, processed by the macrocyclase-peptidase enzyme POPB to yield a toxic cyclic decapeptide. POPB first removes 10 residues from the N-terminus. Conformational trapping of the remaining peptide forces the enzyme to release this intermediate rather than proceed to macrocyclization. The enzyme rebinds the remaining peptide in a different conformation and catalyzes macrocyclization of the N-terminal 10 residues.

Functionally, probable toxin that belongs to the MSDIN-like toxin family responsible for a large number of food poisoning cases and deaths. In Amanita bisporigera (Destroying angel), this protein is MSDIN-like toxin proprotein 6.